Here is a 245-residue protein sequence, read N- to C-terminus: 5-oxoprolinase subunit A (245 aa).

This sequence belongs to the LamB/PxpA family. As to quaternary structure, forms a complex composed of PxpA, PxpB and PxpC.

The enzyme catalyses 5-oxo-L-proline + ATP + 2 H2O = L-glutamate + ADP + phosphate + H(+). Functionally, catalyzes the cleavage of 5-oxoproline to form L-glutamate coupled to the hydrolysis of ATP to ADP and inorganic phosphate. This chain is 5-oxoprolinase subunit A, found in Cronobacter sakazakii (strain ATCC BAA-894) (Enterobacter sakazakii).